A 170-amino-acid chain; its full sequence is Disulfide bond formation protein B 1 (170 aa).

Residues 1–14 (MNDYTLAIRRERRL) are Cytoplasmic-facing. A helical transmembrane segment spans residues 15–31 (LMLLGWVCIALLAGALY). Residues 32–49 (LQYVKNEDPCPLCIIQRY) lie on the Periplasmic side of the membrane. Residues C41 and C44 are joined by a disulfide bond. Residues 50 to 64 (FFCAIGIFAFLAAGI) form a helical membrane-spanning segment. Residues 65–71 (RNWRGVW) are Cytoplasmic-facing. The helical transmembrane segment at 72–89 (VLELLIAIAAAGGVGTAA) threads the bilayer. Residues 90–144 (RHLTIQMNPGFSCGFDTLQPIVDSLPPAQWFPGMFKVAGLCETVYPPIFGILLPG) lie on the Periplasmic side of the membrane. C102 and C130 are disulfide-bonded. Residues 145 to 163 (WSLIGFAVILIAVVASLWR) form a helical membrane-spanning segment. At 164–170 (HRRKLVG) the chain is on the cytoplasmic side.

This sequence belongs to the DsbB family.

It is found in the cell inner membrane. In terms of biological role, required for disulfide bond formation in some periplasmic proteins. Acts by oxidizing the DsbA protein. The sequence is that of Disulfide bond formation protein B 1 from Burkholderia lata (strain ATCC 17760 / DSM 23089 / LMG 22485 / NCIMB 9086 / R18194 / 383).